The following is a 325-amino-acid chain: MKNFSLWCDFIENSFLDNEFLNLLSHGINGATSNPAIFKNAILNSPIYKDKILKLKGKRTKDIYEELAISDIQKAADKLAPLFYQKNDGFISIEIDPRLHDNTTLSLGEAKRLYSAISKENVMIKIPATKASYEVMYELMKNGISVNATLIFSLEQSQKCFEALNAGLVEFRKNNIALKEQNTRTPQAVISIFVSRFDRLLNPKAKEQNRIGILNANLAYNNIYSKNEPNIRALFASTGVKGDDLPKDYYIKELLFENSVNTAPLDAIEAFKGKMDFKKPLMNFEIYTELNQIISQSEREKACNDLLSDGIEQFCIAFEDILKAL.

The active-site Schiff-base intermediate with substrate is Lys-125.

Belongs to the transaldolase family. Type 2 subfamily.

Its subcellular location is the cytoplasm. The catalysed reaction is D-sedoheptulose 7-phosphate + D-glyceraldehyde 3-phosphate = D-erythrose 4-phosphate + beta-D-fructose 6-phosphate. The protein operates within carbohydrate degradation; pentose phosphate pathway; D-glyceraldehyde 3-phosphate and beta-D-fructose 6-phosphate from D-ribose 5-phosphate and D-xylulose 5-phosphate (non-oxidative stage): step 2/3. In terms of biological role, transaldolase is important for the balance of metabolites in the pentose-phosphate pathway. This is Transaldolase from Campylobacter jejuni subsp. jejuni serotype O:6 (strain 81116 / NCTC 11828).